Here is a 462-residue protein sequence, read N- to C-terminus: Chitinase-like mite allergen Der p 18.0101 (462 aa).

Positions 1-25 are cleaved as a signal peptide; the sequence is MTRLSFTVLIFLAAYFGSNIRPNVA. Residues 29 to 378 form the GH18 domain; it reads PKTVCYYESW…HAINSNYFRG (350 aa). Cysteines 33 and 58 form a disulfide. Residues Asn-338 and Asn-441 are each glycosylated (N-linked (GlcNAc...) asparagine). The Chitin-binding type-2 domain maps to 404-462; that stretch reads VFHCHQEGFFRDKTYCAKYYECKKGDFGLEQTVHHCPNHSQAFDEVSRTCVDHAKIPGC. A disulfide bond links Cys-439 and Cys-453.

Belongs to the glycosyl hydrolase 18 family. Chitinase class II subfamily. Expressed in the peritrophic matrix of the midgut, and only very weakly in fecal pellets.

It localises to the secreted. Functionally, probably a non-catalytic chitinase-like protein, which binds to insoluble chitin and enhances the activity of the catalytic chitinases. Has weak chitin-binding activity. The sequence is that of Chitinase-like mite allergen Der p 18.0101 from Dermatophagoides pteronyssinus (European house dust mite).